Consider the following 518-residue polypeptide: Glutamate--cysteine ligase (518 aa).

This sequence belongs to the glutamate--cysteine ligase type 1 family. Type 1 subfamily.

The enzyme catalyses L-cysteine + L-glutamate + ATP = gamma-L-glutamyl-L-cysteine + ADP + phosphate + H(+). It functions in the pathway sulfur metabolism; glutathione biosynthesis; glutathione from L-cysteine and L-glutamate: step 1/2. The chain is Glutamate--cysteine ligase from Klebsiella pneumoniae subsp. pneumoniae (strain ATCC 700721 / MGH 78578).